Reading from the N-terminus, the 284-residue chain is Digeranylgeranylglyceryl phosphate synthase (284 aa).

The next 7 helical transmembrane spans lie at 10–30 (IHNVIGAGLGAFTGYVASSMW), 37–57 (LILAVLVVALVDAGGNAINDV), 76–98 (AVSLRTATSLSYGLMGVGVILSA), 102–119 (YLQFLVALLTSVALIFYA), 126–146 (GIYGNLVVATATALSLFYGGL), 217–237 (LPLFLGYNILYGIVLVPFLYI), and 260–280 (GSAFLGMVAFALGSLPFQFLF).

It belongs to the UbiA prenyltransferase family. DGGGP synthase subfamily. Mg(2+) is required as a cofactor.

The protein resides in the cell membrane. The catalysed reaction is sn-3-O-(geranylgeranyl)glycerol 1-phosphate + (2E,6E,10E)-geranylgeranyl diphosphate = 2,3-bis-O-(geranylgeranyl)-sn-glycerol 1-phosphate + diphosphate. It functions in the pathway membrane lipid metabolism; glycerophospholipid metabolism. Prenyltransferase that catalyzes the transfer of the geranylgeranyl moiety of geranylgeranyl diphosphate (GGPP) to the C2 hydroxyl of (S)-3-O-geranylgeranylglyceryl phosphate (GGGP). This reaction is the second ether-bond-formation step in the biosynthesis of archaeal membrane lipids. The chain is Digeranylgeranylglyceryl phosphate synthase from Metallosphaera sedula (strain ATCC 51363 / DSM 5348 / JCM 9185 / NBRC 15509 / TH2).